We begin with the raw amino-acid sequence, 227 residues long: MTDLSPVLTIDGPSGAGKGTVSRIVAARLGWHYLDSGALYRAVGVAASWADLDVSDPAALVRCTFDTKVEFDDAGEAGLRVLVNGADVTSELRLETTGALASAIAAIPEVRSALKERQRAFRRAPGLVADGRDMGTVIFPDAAFKVFLTASAEERAGRRHKQLMEKGVSVTFADLLREIMARDARDAQRVVAPLRSAKDAVLIDTSGIGVEDVVQRVVGLLADRTPS.

12–20 (GPSGAGKGT) is a binding site for ATP.

It belongs to the cytidylate kinase family. Type 1 subfamily.

It localises to the cytoplasm. The enzyme catalyses CMP + ATP = CDP + ADP. The catalysed reaction is dCMP + ATP = dCDP + ADP. This chain is Cytidylate kinase, found in Xanthomonas oryzae pv. oryzae (strain PXO99A).